The primary structure comprises 766 residues: UPF0313 protein PP_4872 (766 aa).

In terms of domain architecture, Radical SAM core spans 371 to 649; sequence AYEMIRFSVN…KAFLRYHDPK (279 aa). The [4Fe-4S] cluster site is built by C385, C389, and C392. The disordered stretch occupies residues 670–766; the sequence is GKHQLIPLHQ…KKPRQPVIPR (97 aa). Residues 723–735 are compositionally biased toward basic and acidic residues; that stretch reads KPWDKREKAKAEA.

It belongs to the UPF0313 family. The cofactor is [4Fe-4S] cluster.

The chain is UPF0313 protein PP_4872 from Pseudomonas putida (strain ATCC 47054 / DSM 6125 / CFBP 8728 / NCIMB 11950 / KT2440).